The sequence spans 371 residues: Aspartate-semialdehyde dehydrogenase (371 aa).

NADP(+) is bound by residues 9–12 (RGMV), 37–38 (TS), and Gln-73. Arg-102 contacts phosphate. Cys-135 acts as the Acyl-thioester intermediate in catalysis. Residue Gln-162 participates in substrate binding. Residues 165–166 (SG) and Pro-193 each bind NADP(+). Residue Glu-241 coordinates substrate. Lys-244 serves as a coordination point for phosphate. Arg-268 provides a ligand contact to substrate. His-275 acts as the Proton acceptor in catalysis. Residue Gln-351 coordinates NADP(+).

This sequence belongs to the aspartate-semialdehyde dehydrogenase family. As to quaternary structure, homodimer.

It carries out the reaction L-aspartate 4-semialdehyde + phosphate + NADP(+) = 4-phospho-L-aspartate + NADPH + H(+). Its pathway is amino-acid biosynthesis; L-lysine biosynthesis via DAP pathway; (S)-tetrahydrodipicolinate from L-aspartate: step 2/4. It functions in the pathway amino-acid biosynthesis; L-methionine biosynthesis via de novo pathway; L-homoserine from L-aspartate: step 2/3. It participates in amino-acid biosynthesis; L-threonine biosynthesis; L-threonine from L-aspartate: step 2/5. Catalyzes the NADPH-dependent formation of L-aspartate-semialdehyde (L-ASA) by the reductive dephosphorylation of L-aspartyl-4-phosphate. The sequence is that of Aspartate-semialdehyde dehydrogenase from Neisseria meningitidis serogroup B (strain ATCC BAA-335 / MC58).